Reading from the N-terminus, the 704-residue chain is Elongation factor G (704 aa).

Positions 10–290 (NKVRNIGIMA…AVIDYLPSPL (281 aa)) constitute a tr-type G domain. Residues 19 to 26 (AHIDAGKT), 83 to 87 (DTPGH), and 137 to 140 (NKMD) each bind GTP.

It belongs to the TRAFAC class translation factor GTPase superfamily. Classic translation factor GTPase family. EF-G/EF-2 subfamily.

Its subcellular location is the cytoplasm. Functionally, catalyzes the GTP-dependent ribosomal translocation step during translation elongation. During this step, the ribosome changes from the pre-translocational (PRE) to the post-translocational (POST) state as the newly formed A-site-bound peptidyl-tRNA and P-site-bound deacylated tRNA move to the P and E sites, respectively. Catalyzes the coordinated movement of the two tRNA molecules, the mRNA and conformational changes in the ribosome. This chain is Elongation factor G, found in Clavibacter sepedonicus (Clavibacter michiganensis subsp. sepedonicus).